The chain runs to 169 residues: Peptide methionine sulfoxide reductase MsrA (169 aa).

Cys10 is a catalytic residue.

This sequence belongs to the MsrA Met sulfoxide reductase family.

The enzyme catalyses L-methionyl-[protein] + [thioredoxin]-disulfide + H2O = L-methionyl-(S)-S-oxide-[protein] + [thioredoxin]-dithiol. The catalysed reaction is [thioredoxin]-disulfide + L-methionine + H2O = L-methionine (S)-S-oxide + [thioredoxin]-dithiol. Has an important function as a repair enzyme for proteins that have been inactivated by oxidation. Catalyzes the reversible oxidation-reduction of methionine sulfoxide in proteins to methionine. The protein is Peptide methionine sulfoxide reductase MsrA of Streptococcus pyogenes serotype M1.